Consider the following 320-residue polypeptide: ATP-dependent 6-phosphofructokinase (320 aa).

Gly-12 contributes to the ATP binding site. Residues 22 to 26 and 55 to 60 contribute to the ADP site; these read RSVVR and RYSVSD. ATP contacts are provided by residues 73-74 and 103-106; these read RF and GDGS. Asp-104 serves as a coordination point for Mg(2+). Substrate is bound at residue 126 to 128; it reads TID. Catalysis depends on Asp-128, which acts as the Proton acceptor. Position 155 (Arg-155) interacts with ADP. Substrate contacts are provided by residues Arg-163 and 170 to 172; that span reads MGR. ADP-binding positions include 186–188 and 214–216; these read GCE and KKH. Residues Glu-223, Arg-244, and 250-253 each bind substrate; that span reads HIQR.

This sequence belongs to the phosphofructokinase type A (PFKA) family. ATP-dependent PFK group I subfamily. Prokaryotic clade 'B1' sub-subfamily. In terms of assembly, homotetramer. It depends on Mg(2+) as a cofactor.

It is found in the cytoplasm. The enzyme catalyses beta-D-fructose 6-phosphate + ATP = beta-D-fructose 1,6-bisphosphate + ADP + H(+). Its pathway is carbohydrate degradation; glycolysis; D-glyceraldehyde 3-phosphate and glycerone phosphate from D-glucose: step 3/4. Allosterically activated by ADP and other diphosphonucleosides, and allosterically inhibited by phosphoenolpyruvate. Functionally, catalyzes the phosphorylation of D-fructose 6-phosphate to fructose 1,6-bisphosphate by ATP, the first committing step of glycolysis. This chain is ATP-dependent 6-phosphofructokinase, found in Baumannia cicadellinicola subsp. Homalodisca coagulata.